Here is a 660-residue protein sequence, read N- to C-terminus: WD repeat-containing protein 48 homolog (660 aa).

WD repeat units follow at residues 23–78, 84–120, 123–162, 174–213, 216–255, 258–297, 300–341, and 362–401; these read MHRS…RDLH, HHTDWVNDIVLCCGVISASSDTTVKVWNAQKGFCMST, THRDYVRALAYARDVEMVASGGFDQLIYLWDIATLTKLTA, GNKDSIYSLATNPSGTVVISGSTEKVLRVFDPRACQKLMK, GHTDNVKAVVVNRDGTQCISASSDGTIKLWSIGQQCCISS, CHSESVWALQVDSNFSCVYSGGRDKRIFRTAINDFKTAQL, IEDA…ISVE, and PGAASIRQHVVLNDKRHIVTKDTDDNVAMWDVLKGRKVCD.

This sequence belongs to the WD repeat WDR48 family.

Functionally, regulator of deubiquitinating complexes. Activates deubiquitination by increasing the catalytic turnover without increasing the affinity of deubiquitinating enzymes for the substrate. The chain is WD repeat-containing protein 48 homolog from Brugia malayi (Filarial nematode worm).